The following is a 396-amino-acid chain: UPF0164 protein TP_0858 (396 aa).

Positions M1–A28 are cleaved as a signal peptide.

It belongs to the UPF0164 family.

This is UPF0164 protein TP_0858 from Treponema pallidum (strain Nichols).